Consider the following 456-residue polypeptide: uncharacterized protein (456 aa).

A compositionally biased stretch (low complexity) spans 415–428 (SNSNGSSSSGNSSS). Residues 415 to 444 (SNSNGSSSSGNSSSIYNSHLMNDKKKNNNA) form a disordered region.

This is an uncharacterized protein from Saccharomyces cerevisiae (strain ATCC 204508 / S288c) (Baker's yeast).